The sequence spans 602 residues: Elongation factor 4 (602 aa).

In terms of domain architecture, tr-type G spans Arg-7 to Gln-189. GTP contacts are provided by residues Asp-19–Thr-24 and Asn-136–Asp-139.

Belongs to the TRAFAC class translation factor GTPase superfamily. Classic translation factor GTPase family. LepA subfamily.

It localises to the cell inner membrane. It catalyses the reaction GTP + H2O = GDP + phosphate + H(+). Functionally, required for accurate and efficient protein synthesis under certain stress conditions. May act as a fidelity factor of the translation reaction, by catalyzing a one-codon backward translocation of tRNAs on improperly translocated ribosomes. Back-translocation proceeds from a post-translocation (POST) complex to a pre-translocation (PRE) complex, thus giving elongation factor G a second chance to translocate the tRNAs correctly. Binds to ribosomes in a GTP-dependent manner. The sequence is that of Elongation factor 4 from Xylella fastidiosa (strain M12).